We begin with the raw amino-acid sequence, 1063 residues long: Structural polyprotein (1063 aa).

A disordered region spans residues 1 to 131 (MASTTPITME…LGPPTNPFQA (131 aa)). Residues 30–69 (GASQSRRPRPPRQRDSSTSGDDSGRDSGGPRRRRGNRGRG) form a human C1QBP/SF2P32-binding region. At Ser46 the chain carries Phosphoserine; by host. The span at 59–69 (PRRRRGNRGRG) shows a compositional bias: basic residues. Over residues 70 to 87 (QRRDWSRAPPPPEERQET) the composition is skewed to basic and acidic residues. The segment covering 93–107 (APKPSRAPPQQPQPP) has biased composition (pro residues). An intrachain disulfide couples Cys153 to Cys197. The tract at residues 279–300 (GAPQAFLAGLLLATVAVGTARA) is functions as E2 signal peptide. Residues 301 to 534 (GLQPRADMAA…LWLATANALS (234 aa)) lie on the Extracellular side of the membrane. N-linked (GlcNAc...) asparagine; by host glycosylation is found at Asn353, Asn371, Asn410, and Asn429. The chain crosses the membrane as a helical span at residues 535–555 (LDHALAAFVLLVPWVLIFMVC). At 556-582 (RRACRRRGAAAALTAVVLQGYNPPAYG) the chain is on the cytoplasmic side. The segment at 563 to 582 (GAAAALTAVVLQGYNPPAYG) is functions as E1 signal peptide. The Extracellular segment spans residues 583-1028 (EEAFTYLCTA…QTWAEWAAAH (446 aa)). Intrachain disulfides connect Cys590-Cys595, Cys619-Cys824, Cys641-Cys653, Cys699-Cys712, Cys758-Cys767, Cys807-Cys817, Cys931-Cys934, and Cys950-Cys983. A glycan (N-linked (GlcNAc...) asparagine; by host) is linked at Asn658. Ca(2+) contacts are provided by Asn670 and Ala671. Ca(2+) contacts are provided by Asp718 and Thr719. N-linked (GlcNAc...) asparagine; by host glycans are attached at residues Asn759 and Asn791. O-linked (GalNAc...) threonine; by host glycosylation is found at Thr1011 and Thr1012. The helical transmembrane segment at 1029–1049 (WWQLTLGAICALPLAGLLACC) threads the bilayer. The Extracellular segment spans residues 1050–1063 (AKCLYYLRGAIAPR).

Homodimer; further assembles into homooligomer. Interacts with human C1QBP. Interacts (via N-terminus) with protease/methyltransferase p150. As to quaternary structure, heterodimer with spike glycoprotein E2. In terms of assembly, heterodimer with spike glycoprotein E1. Post-translationally, structural polyprotein: Specific enzymatic cleavages in vivo yield mature proteins. Two signal peptidase-mediated cleavages within the polyprotein produce the structural proteins capsid, E2, and E1. The E2 signal peptide remains attached to the C-terminus of the capsid protein after cleavage by the signal peptidase. Another signal peptide at E2 C-terminus directs E1 to the ER, with a similar mechanism. Contains three N-linked oligosaccharides. In terms of processing, capsid is phosphorylated on Ser-46 by host. This phosphorylation negatively regulates capsid protein RNA-binding activity. Dephosphorylated by human PP1A.

It is found in the virion. Its subcellular location is the host cytoplasm. The protein resides in the host mitochondrion. The protein localises to the virion membrane. It localises to the host Golgi apparatus membrane. Functionally, capsid protein interacts with genomic RNA and assembles into icosahedric core particles 65-70 nm in diameter. The resulting nucleocapsid eventually associates with the cytoplasmic domain of E2 at the cell membrane, leading to budding and formation of mature virions from host Golgi membranes. Phosphorylation negatively regulates RNA-binding activity, possibly delaying virion assembly during the viral replication phase. Capsid protein dimerizes and becomes disulfide-linked in the virion. Modulates genomic RNA replication. Modulates subgenomic RNA synthesis by interacting with human C1QBP/SF2P32. Induces both perinuclear clustering of mitochondria and the formation of electron-dense intermitochondrial plaques, both hallmarks of rubella virus infected cells. Induces apoptosis when expressed in transfected cells. Its function is as follows. Responsible for viral attachment to target host cell, by binding to the cell receptor. Its transport to the plasma membrane depends on interaction with E1 protein. The surface glycoproteins display an irregular helical organization and a pseudo-tetrameric inner nucleocapsid arrangement. Class II viral fusion protein. Fusion activity is inactive as long as E1 is bound to E2 in mature virion. After virus attachment to target cell and clathrin-mediated endocytosis, acidification of the endosome would induce dissociation of E1/E2 heterodimer and concomitant trimerization of the E1 subunits. This E1 homotrimer is fusion active, and promotes release of viral nucleocapsid in cytoplasm after endosome and viral membrane fusion. The cytoplasmic tail of spike glycoprotein E1 modulates virus release. The surface glycoproteins display an irregular helical organization and a pseudo-tetrameric inner nucleocapsid arrangement. The chain is Structural polyprotein from Rubella virus (strain Therien) (RUBV).